Here is a 212-residue protein sequence, read N- to C-terminus: Thymidylate kinase (212 aa).

ATP-binding positions include 16 to 21, R97, R182, and K192; that span reads RAGKTT.

This sequence belongs to the thymidylate kinase family. Requires Mg(2+) as cofactor.

The enzyme catalyses dTMP + ATP = dTDP + ADP. The protein operates within pyrimidine metabolism; dTTP biosynthesis. In terms of biological role, catalyzes the phosphorylation of thymidine monophosphate (dTMP) to thymidine diphosphate (dTDP), the immediate precursor for the DNA building block dTTP, with ATP as the preferred phosphoryl donor in the presence of Mg(2+). This is Thymidylate kinase (dtymk) from Danio rerio (Zebrafish).